The chain runs to 109 residues: Putative pterin-4-alpha-carbinolamine dehydratase (109 aa).

It belongs to the pterin-4-alpha-carbinolamine dehydratase family.

The catalysed reaction is (4aS,6R)-4a-hydroxy-L-erythro-5,6,7,8-tetrahydrobiopterin = (6R)-L-erythro-6,7-dihydrobiopterin + H2O. The protein is Putative pterin-4-alpha-carbinolamine dehydratase of Halorhodospira halophila (strain DSM 244 / SL1) (Ectothiorhodospira halophila (strain DSM 244 / SL1)).